The chain runs to 542 residues: Putative leucine aminopeptidase 1 (542 aa).

Residues Lys294 and Asp299 each coordinate Mn(2+). Residue Lys323 is part of the active site. Asp336, Asp396, and Glu398 together coordinate Mn(2+). Arg400 is an active-site residue.

The protein belongs to the peptidase M17 family. As to quaternary structure, homohexamer (dimer of homotrimers). Mn(2+) is required as a cofactor.

It localises to the cytoplasm. It catalyses the reaction Release of an N-terminal amino acid, Xaa-|-Yaa-, in which Xaa is preferably Leu, but may be other amino acids including Pro although not Arg or Lys, and Yaa may be Pro. Amino acid amides and methyl esters are also readily hydrolyzed, but rates on arylamides are exceedingly low.. The catalysed reaction is Release of N-terminal proline from a peptide.. Its function is as follows. Presumably involved in the processing and regular turnover of intracellular proteins. Catalyzes the removal of unsubstituted N-terminal amino acids from various peptides. This is Putative leucine aminopeptidase 1 from Oryza sativa subsp. japonica (Rice).